We begin with the raw amino-acid sequence, 189 residues long: MAQLYFKYGTMNSGKSIEILKVAHNYEEQGKPVLLMTSSLDTRAGVGTVASRIGMKAEAVAIDEEMSVFDYVNSLPAKPFCVLIDEAQFLNKKHVYDFARVVDELNVPVMAFGLKNDFRNELFEGSKYLLLLADKIEEIKTICWYCSKKATMVIRTIDGKPVYEGEQLQIGGNETYIPVCRKHYFKPEI.

ATP contacts are provided by residues 9-16 and 85-88; these read GTMNSGKS and DEAQ. Catalysis depends on glutamate 86, which acts as the Proton acceptor. The Zn(2+) site is built by cysteine 143, cysteine 146, cysteine 180, and histidine 183.

Belongs to the thymidine kinase family. Homotetramer.

Its subcellular location is the cytoplasm. It carries out the reaction thymidine + ATP = dTMP + ADP + H(+). This chain is Thymidine kinase, found in Lactococcus lactis subsp. lactis (strain IL1403) (Streptococcus lactis).